Here is a 732-residue protein sequence, read N- to C-terminus: Anthranilate synthase (732 aa).

In terms of domain architecture, Glutamine amidotransferase type-1 spans 533 to 728; it reads RVLLVDHDDS…MDRLAAGALT (196 aa). 583–585 contacts L-glutamine; it reads GPG. C610 acts as the Nucleophile; for GATase activity in catalysis. Residues Q614 and 660–661 contribute to the L-glutamine site; that span reads SL. Active-site for GATase activity residues include H699 and E701.

The catalysed reaction is chorismate + L-glutamine = anthranilate + pyruvate + L-glutamate + H(+). It functions in the pathway amino-acid biosynthesis; L-tryptophan biosynthesis; L-tryptophan from chorismate: step 1/5. The sequence is that of Anthranilate synthase (trpE(G)) from Azospirillum brasilense.